We begin with the raw amino-acid sequence, 163 residues long: Ribonuclease H (163 aa).

In terms of domain architecture, RNase H type-1 spans 16 to 157 (TTSPVEIYCD…CDSLARQAIT (142 aa)). Residues D25, E63, D85, and D149 each coordinate Mg(2+).

It belongs to the RNase H family. Monomer. Requires Mg(2+) as cofactor.

It localises to the cytoplasm. It catalyses the reaction Endonucleolytic cleavage to 5'-phosphomonoester.. Functionally, endonuclease that specifically degrades the RNA of RNA-DNA hybrids. The sequence is that of Ribonuclease H from Pelobacter propionicus (strain DSM 2379 / NBRC 103807 / OttBd1).